Reading from the N-terminus, the 78-residue chain is Large ribosomal subunit protein eL20 (78 aa).

Belongs to the eukaryotic ribosomal protein eL20 family. Part of the 50S ribosomal subunit. Binds 23S rRNA.

This is Large ribosomal subunit protein eL20 from Pyrobaculum calidifontis (strain DSM 21063 / JCM 11548 / VA1).